A 545-amino-acid chain; its full sequence is Probable quinate permease (545 aa).

The Cytoplasmic portion of the chain corresponds to 1 to 22 (MSILSLVEDRPTPKEVYNWRIY). Residues 23–43 (LLAAVASFTSCMIGYDSAFIG) form a helical membrane-spanning segment. Residues 44-66 (TTISLQSFKDEFNWDAMSTDKQN) lie on the Extracellular side of the membrane. The chain crosses the membrane as a helical span at residues 67–87 (LISANIVSLYQAGAFFGAFFA). At 88 to 97 (YPMGHFWGRR) the chain is on the cytoplasmic side. The helical transmembrane segment at 98–118 (WGLFVAALVFTLGAGLMLGAN) threads the bilayer. The Extracellular segment spans residues 119 to 130 (GDRGLGLIYGGR). A helical transmembrane segment spans residues 131–151 (VLAGLGVGAGSNITPIYISEL). The Cytoplasmic portion of the chain corresponds to 152–159 (APPAIRGR). The chain crosses the membrane as a helical span at residues 160–180 (LVGVYELGWQIGGLVGFWICF). Residues 181 to 193 (GVDDTLAPSHKQW) lie on the Extracellular side of the membrane. A helical membrane pass occupies residues 194–214 (IIPFAVQLIPSGLLLLGILFV). Topologically, residues 215–285 (RESPRWLFLR…VWSNKRIMYR (71 aa)) are cytoplasmic. The chain crosses the membrane as a helical span at residues 286–306 (LFLGSMLFLWQNGSGINAINY). The Extracellular segment spans residues 307–325 (YSPTVFKSIGLRGANTSLL). The helical transmembrane segment at 326–346 (TTGIFGVVKTVVTFVWLLWLI) threads the bilayer. At 347–352 (DRLGRR) the chain is on the cytoplasmic side. Residues 353 to 373 (LLLMIGAAGGSVCLWIVGAYI) form a helical membrane-spanning segment. Over 374–384 (KVAKPTERDPD) the chain is Extracellular. A helical membrane pass occupies residues 385–405 (APLDGGGIAAMFFFYLWTVFY). The Cytoplasmic segment spans residues 406–457 (TPSWNGTPWVMNSEMFDPNVRSLAQACAAGSNWLWNFLISRFTPQMFAKMEY). Residues 458-478 (GVYFFFASLMILSIVFVFFLI) form a helical membrane-spanning segment. Residues 479–545 (PETKGIPLES…VEQAESVPKA (67 aa)) are Extracellular-facing. Positions 520–545 (IEESGYTKSDAQQVERVEQAESVPKA) are disordered.

The protein belongs to the major facilitator superfamily. Sugar transporter (TC 2.A.1.1) family. In terms of assembly, interacts with creB. Post-translationally, ubiquitinated. Deubiquitinated by creB, probably to control its activity or amount.

It is found in the cell membrane. In terms of biological role, integral membrane transporter that imports quinic acid to be catabolized as a carbon source. This is Probable quinate permease (qutD) from Aspergillus terreus (strain NIH 2624 / FGSC A1156).